A 125-amino-acid polypeptide reads, in one-letter code: UPF0102 protein PA4424 (125 aa).

This sequence belongs to the UPF0102 family.

The sequence is that of UPF0102 protein PA4424 from Pseudomonas aeruginosa (strain ATCC 15692 / DSM 22644 / CIP 104116 / JCM 14847 / LMG 12228 / 1C / PRS 101 / PAO1).